The sequence spans 465 residues: UDP-N-acetylmuramate--L-alanine ligase (465 aa).

115–121 is a binding site for ATP; sequence GAHGKTT.

The protein belongs to the MurCDEF family.

It localises to the cytoplasm. The catalysed reaction is UDP-N-acetyl-alpha-D-muramate + L-alanine + ATP = UDP-N-acetyl-alpha-D-muramoyl-L-alanine + ADP + phosphate + H(+). It participates in cell wall biogenesis; peptidoglycan biosynthesis. Functionally, cell wall formation. This chain is UDP-N-acetylmuramate--L-alanine ligase, found in Coxiella burnetii (strain Dugway 5J108-111).